Here is a 510-residue protein sequence, read N- to C-terminus: UDP-galactopyranose mutase (510 aa).

FAD is bound by residues threonine 18, aspartate 38, leucine 46, and glycine 61. Glycine 61 and glycine 62 together coordinate UDP-alpha-D-galactose. Histidine 63 serves as a coordination point for FAD. Positions 68, 91, and 93 each coordinate NADH. The NADPH site is built by histidine 68, arginine 91, serine 93, and tyrosine 104. UDP-alpha-D-galactose is bound by residues tyrosine 104, glutamine 107, methionine 159, tyrosine 162, asparagine 163, tryptophan 167, and arginine 182. Asparagine 203 is an NADPH binding site. Asparagine 207 contributes to the UDP-alpha-D-galactose binding site. FAD is bound at residue valine 242. 2 residues coordinate NADPH: tryptophan 315 and tyrosine 317. UDP-alpha-D-galactose contacts are provided by tyrosine 317, arginine 327, and tyrosine 419. Arginine 327 is a binding site for FAD. Residues tyrosine 419 and arginine 447 each contribute to the NADH site. NADPH is bound by residues tyrosine 419 and arginine 447. Arginine 447 is an FAD binding site. Tyrosine 453 provides a ligand contact to UDP-alpha-D-galactose. Glycine 456, asparagine 457, and glutamine 458 together coordinate FAD. Asparagine 457 contacts UDP-alpha-D-galactose. Residue asparagine 457 participates in NADH binding. Asparagine 457 contacts NADPH. Histidine 460 contributes to the NADPH binding site. FAD is bound at residue serine 461.

The protein belongs to the UDP-galactopyranose/dTDP-fucopyranose mutase family. As to quaternary structure, homotetramer. It depends on FAD as a cofactor.

The enzyme catalyses UDP-alpha-D-galactose = UDP-alpha-D-galactofuranose. UDP-galactopyranose mutase, key flavoenzyme of galactofuranose metabolism that catalyzes the 6-to-5 ring contraction of UDP-galactopyranose to UDP-galactofuranose, the donor used by various galacto-furanosyltransferases. Controls the biosynthesis of galactomannan and galactofuranose containing glycoconjugates. The flavin functions as nucleophile, forming a flavin-sugar adduct that facilitates galactose-ring opening and contraction. The binding of UDP-galactopyranose induces profound conformational changes in the enzyme and two loops on opposite sides of the active site move toward each other by over 10 Angstroms to cover the substrate and create a closed active site. In Aspergillus fumigatus (Neosartorya fumigata), this protein is UDP-galactopyranose mutase.